The sequence spans 174 residues: Crossover junction endodeoxyribonuclease RuvC (174 aa).

Residues aspartate 8, glutamate 68, and aspartate 140 contribute to the active site. Mg(2+)-binding residues include aspartate 8, glutamate 68, and aspartate 140.

It belongs to the RuvC family. As to quaternary structure, homodimer which binds Holliday junction (HJ) DNA. The HJ becomes 2-fold symmetrical on binding to RuvC with unstacked arms; it has a different conformation from HJ DNA in complex with RuvA. In the full resolvosome a probable DNA-RuvA(4)-RuvB(12)-RuvC(2) complex forms which resolves the HJ. The cofactor is Mg(2+).

The protein resides in the cytoplasm. It catalyses the reaction Endonucleolytic cleavage at a junction such as a reciprocal single-stranded crossover between two homologous DNA duplexes (Holliday junction).. Functionally, the RuvA-RuvB-RuvC complex processes Holliday junction (HJ) DNA during genetic recombination and DNA repair. Endonuclease that resolves HJ intermediates. Cleaves cruciform DNA by making single-stranded nicks across the HJ at symmetrical positions within the homologous arms, yielding a 5'-phosphate and a 3'-hydroxyl group; requires a central core of homology in the junction. The consensus cleavage sequence is 5'-(A/T)TT(C/G)-3'. Cleavage occurs on the 3'-side of the TT dinucleotide at the point of strand exchange. HJ branch migration catalyzed by RuvA-RuvB allows RuvC to scan DNA until it finds its consensus sequence, where it cleaves and resolves the cruciform DNA. The sequence is that of Crossover junction endodeoxyribonuclease RuvC from Legionella pneumophila (strain Paris).